The sequence spans 1363 residues: Neurexin-1 (1363 aa).

At 1 to 1287 (SKRRDMTVFS…EVIRESSSTT (1287 aa)) the chain is on the extracellular side. N-linked (GlcNAc...) asparagine glycosylation occurs at N49. An EGF-like 1 domain is found at 67–105 (QSRLCAREDVCLNGGVCSVLNDQAVCDCSQTGFRGKDCS). Cystine bridges form between C71/C83, C77/C92, and C94/C104. Laminin G-like domains follow at residues 132-329 (IATF…AFKC) and 336-528 (DPIT…KPSC). Positions 178, 195, and 263 each coordinate Ca(2+). 5 cysteine pairs are disulfide-bonded: C293-C329, C499-C528, C536-C547, C541-C556, and C558-C568. An EGF-like 2 domain is found at 532–569 (TAKPCLSNPCKNNGVCRDGWNRYVCDCSGTGYLGRSCE). Laminin G-like domains are found at residues 574–747 (ILSY…IDYC) and 761–936 (DPVT…ERGC). An N-linked (GlcNAc...) asparagine glycan is attached at N646. Intrachain disulfides connect C908-C936, C943-C954, C948-C963, and C965-C975. The EGF-like 3 domain maps to 939–976 (PSTTCQEDSCANQGVCLQQWDGFSCDCSMTSFSGPLCN). In terms of domain architecture, Laminin G-like 5 spans 982–1180 (YIFSKGGGQI…DANIVIEGNV (199 aa)). N1079 carries an N-linked (GlcNAc...) asparagine glycan. The interval 1244 to 1280 (CPSDDEDIDPCEPSSGGLANPTRAGGGREYPGSSEVI) is disordered. Residues 1288–1308 (GMVVGIVAAAALCILILLYAM) traverse the membrane as a helical segment. Over 1309–1363 (YKYRNRDEGSYHVDESRNYISNSAQSNGAVIKEKQPNSAKSSNKNKKNKDKEYYV) the chain is Cytoplasmic. Residues 1330–1363 (NSAQSNGAVIKEKQPNSAKSSNKNKKNKDKEYYV) form a disordered region.

This sequence belongs to the neurexin family. The cytoplasmic C-terminal region binds to CASK. The laminin G-like domain 1 binds to NXPH1. Specific isoforms bind to alpha-dystroglycan and to alpha-latrotoxin. Post-translationally, N- and O-glycosylated.

Its subcellular location is the membrane. Its function is as follows. Neuronal cell surface protein that may be involved in cell recognition and cell adhesion. May mediate intracellular signaling. This is Neurexin-1 (NRXN1) from Gallus gallus (Chicken).